The sequence spans 266 residues: Killer cell lectin-like receptor 5 (266 aa).

Residues Met1–Gln44 are Cytoplasmic-facing. The helical; Signal-anchor for type II membrane protein transmembrane segment at Leu45–Val66 threads the bilayer. Residues Lys67–Gly266 lie on the Extracellular side of the membrane. N-linked (GlcNAc...) asparagine glycans are attached at residues Asn87 and Asn104. Residues Gly143 to Leu261 enclose the C-type lectin domain. 4 disulfide bridges follow: Cys149–Cys154, Cys167–Cys255, Cys171–Cys257, and Cys236–Cys249. Residue Asn250 is glycosylated (N-linked (GlcNAc...) asparagine).

In terms of assembly, homodimer; disulfide-linked. Mostly expressed in NK cells, but also observed on NK T and memory T-cells.

The protein resides in the membrane. Receptor on natural killer (NK) cells for class I MHC. The polypeptide is Killer cell lectin-like receptor 5 (Klra5) (Mus musculus (Mouse)).